We begin with the raw amino-acid sequence, 359 residues long: 3-dehydroquinate synthase (359 aa).

Residues 71–76 (DGEAHK), 105–109 (GVIGD), 129–130 (TT), Lys142, Lys151, and 169–172 (TLHT) each bind NAD(+). Zn(2+)-binding residues include Glu184, His247, and His264.

It belongs to the sugar phosphate cyclases superfamily. Dehydroquinate synthase family. Co(2+) is required as a cofactor. It depends on Zn(2+) as a cofactor. NAD(+) serves as cofactor.

It is found in the cytoplasm. It catalyses the reaction 7-phospho-2-dehydro-3-deoxy-D-arabino-heptonate = 3-dehydroquinate + phosphate. The protein operates within metabolic intermediate biosynthesis; chorismate biosynthesis; chorismate from D-erythrose 4-phosphate and phosphoenolpyruvate: step 2/7. In terms of biological role, catalyzes the conversion of 3-deoxy-D-arabino-heptulosonate 7-phosphate (DAHP) to dehydroquinate (DHQ). This is 3-dehydroquinate synthase from Neisseria gonorrhoeae (strain ATCC 700825 / FA 1090).